A 575-amino-acid polypeptide reads, in one-letter code: U3 small nucleolar RNA-associated protein 9 (575 aa).

Composition is skewed to basic and acidic residues over residues 340–355 (NEKNNADEADQKKLEE) and 364–375 (VQHEKKETETKI). Positions 340-375 (NEKNNADEADQKKLEEKEEEAQPEVQHEKKETETKI) are disordered. Serine 547 and serine 564 each carry phosphoserine.

In terms of assembly, interacts with snoRNA U3. Interacts with MPP10. Component of the ribosomal small subunit (SSU) processome composed of at least 40 protein subunits and snoRNA U3. In the absence of snoRNA3, forms a complex with other t-UTPs. This complex can associate with pre-18S ribosomal RNAs.

The protein localises to the nucleus. It is found in the nucleolus. Involved in nucleolar processing of pre-18S ribosomal RNA. Required for optimal pre-ribosomal RNA transcription by RNA polymerase I together with a subset of U3 proteins required for transcription (t-UTPs). This is U3 small nucleolar RNA-associated protein 9 (UTP9) from Saccharomyces cerevisiae (strain ATCC 204508 / S288c) (Baker's yeast).